Reading from the N-terminus, the 600-residue chain is Cytidine monophosphate-N-acetylneuraminic acid hydroxylase (600 aa).

Residues 9-107 form the Rieske domain; the sequence is LSPVEVASLK…VEMDENNRLL (99 aa). Residues Cys49, His51, Cys70, and His73 each coordinate [2Fe-2S] cluster.

This sequence belongs to the CMP-Neu5Ac hydroxylase family. The cofactor is [2Fe-2S] cluster.

The protein resides in the cytoplasm. It carries out the reaction CMP-N-acetyl-beta-neuraminate + 2 Fe(II)-[cytochrome b5] + O2 + 2 H(+) = CMP-N-glycoloyl-beta-neuraminate + 2 Fe(III)-[cytochrome b5] + H2O. Its pathway is amino-sugar metabolism; N-acetylneuraminate metabolism. Its function is as follows. Sialic acids are components of carbohydrate chains of glycoconjugates and are involved in cell-cell recognition and cell-pathogen interactions. Catalyzes the conversion of CMP-N-acetylneuraminic acid (CMP-Neu5Ac) into its hydroxylated derivative CMP-N-glycolylneuraminic acid (CMP-Neu5Gc), a sialic acid abundantly expressed at the surface of many cells. The protein is Cytidine monophosphate-N-acetylneuraminic acid hydroxylase (CMAH) of Gorilla gorilla gorilla (Western lowland gorilla).